We begin with the raw amino-acid sequence, 530 residues long: Synembryn-like chaperone C3E7.04c (530 aa).

Residues 492–512 (SFIYHCYHSFVGPIHILLLMF) traverse the membrane as a helical segment.

This sequence belongs to the synembryn family.

The protein localises to the membrane. Functionally, chaperone that specifically binds and folds some, but not all, nascent G alpha proteins prior to G protein heterotrimer formation, promoting their stability and activity. Also acts as a guanine nucleotide exchange factor (GEF) for G alpha proteins by stimulating exchange of bound GDP for free GTP. The polypeptide is Synembryn-like chaperone C3E7.04c (Schizosaccharomyces pombe (strain 972 / ATCC 24843) (Fission yeast)).